A 430-amino-acid chain; its full sequence is Dihydroorotase (430 aa).

Histidine 60 and histidine 62 together coordinate Zn(2+). Residues 62 to 64 (HFR) and asparagine 94 each bind substrate. 3 residues coordinate Zn(2+): aspartate 151, histidine 178, and histidine 231. Residue asparagine 277 coordinates substrate. Residue aspartate 304 participates in Zn(2+) binding. Aspartate 304 is an active-site residue. Substrate is bound by residues histidine 308 and 322-323 (FG).

It belongs to the metallo-dependent hydrolases superfamily. DHOase family. Class I DHOase subfamily. Zn(2+) serves as cofactor.

The enzyme catalyses (S)-dihydroorotate + H2O = N-carbamoyl-L-aspartate + H(+). It participates in pyrimidine metabolism; UMP biosynthesis via de novo pathway; (S)-dihydroorotate from bicarbonate: step 3/3. Functionally, catalyzes the reversible cyclization of carbamoyl aspartate to dihydroorotate. The chain is Dihydroorotase from Carboxydothermus hydrogenoformans (strain ATCC BAA-161 / DSM 6008 / Z-2901).